The chain runs to 512 residues: Cobyric acid synthase (512 aa).

The region spanning 251–451 is the GATase cobBQ-type domain; that stretch reads ALDIAVIRLP…IHGLFDSHHF (201 aa). Residue Cys332 is the Nucleophile of the active site. Residue His443 is part of the active site.

The protein belongs to the CobB/CobQ family. CobQ subfamily.

It functions in the pathway cofactor biosynthesis; adenosylcobalamin biosynthesis. Its function is as follows. Catalyzes amidations at positions B, D, E, and G on adenosylcobyrinic A,C-diamide. NH(2) groups are provided by glutamine, and one molecule of ATP is hydrogenolyzed for each amidation. The chain is Cobyric acid synthase from Yersinia enterocolitica serotype O:8 / biotype 1B (strain NCTC 13174 / 8081).